We begin with the raw amino-acid sequence, 189 residues long: Elongation factor P (189 aa).

N6-(3,6-diaminohexanoyl)-5-hydroxylysine is present on lysine 34.

This sequence belongs to the elongation factor P family. In terms of processing, may be beta-lysylated on the epsilon-amino group of Lys-34 by the combined action of EpmA and EpmB, and then hydroxylated on the C5 position of the same residue by EpmC (if this protein is present). Lysylation is critical for the stimulatory effect of EF-P on peptide-bond formation. The lysylation moiety may extend toward the peptidyltransferase center and stabilize the terminal 3-CCA end of the tRNA. Hydroxylation of the C5 position on Lys-34 may allow additional potential stabilizing hydrogen-bond interactions with the P-tRNA.

It is found in the cytoplasm. It participates in protein biosynthesis; polypeptide chain elongation. In terms of biological role, involved in peptide bond synthesis. Alleviates ribosome stalling that occurs when 3 or more consecutive Pro residues or the sequence PPG is present in a protein, possibly by augmenting the peptidyl transferase activity of the ribosome. Modification of Lys-34 is required for alleviation. This Francisella tularensis subsp. novicida (strain U112) protein is Elongation factor P.